Here is a 195-residue protein sequence, read N- to C-terminus: Ribosome maturation factor RimM (195 aa).

One can recognise a PRC barrel domain in the interval A101–L191.

It belongs to the RimM family. In terms of assembly, binds ribosomal protein uS19.

The protein resides in the cytoplasm. In terms of biological role, an accessory protein needed during the final step in the assembly of 30S ribosomal subunit, possibly for assembly of the head region. Essential for efficient processing of 16S rRNA. May be needed both before and after RbfA during the maturation of 16S rRNA. It has affinity for free ribosomal 30S subunits but not for 70S ribosomes. This Bifidobacterium adolescentis (strain ATCC 15703 / DSM 20083 / NCTC 11814 / E194a) protein is Ribosome maturation factor RimM.